A 311-amino-acid polypeptide reads, in one-letter code: tRNA dimethylallyltransferase (311 aa).

11 to 18 (GPTASGKS) lines the ATP pocket. Residue 13 to 18 (TASGKS) participates in substrate binding. 2 interaction with substrate tRNA regions span residues 36-39 (DSMQ) and 160-164 (QRLIR).

The protein belongs to the IPP transferase family. In terms of assembly, monomer. Mg(2+) is required as a cofactor.

The catalysed reaction is adenosine(37) in tRNA + dimethylallyl diphosphate = N(6)-dimethylallyladenosine(37) in tRNA + diphosphate. In terms of biological role, catalyzes the transfer of a dimethylallyl group onto the adenine at position 37 in tRNAs that read codons beginning with uridine, leading to the formation of N6-(dimethylallyl)adenosine (i(6)A). The chain is tRNA dimethylallyltransferase from Rickettsia typhi (strain ATCC VR-144 / Wilmington).